Consider the following 335-residue polypeptide: Tetraacyldisaccharide 4'-kinase (335 aa).

58-65 (TMGGAGKT) serves as a coordination point for ATP.

It belongs to the LpxK family.

It catalyses the reaction a lipid A disaccharide + ATP = a lipid IVA + ADP + H(+). Its pathway is glycolipid biosynthesis; lipid IV(A) biosynthesis; lipid IV(A) from (3R)-3-hydroxytetradecanoyl-[acyl-carrier-protein] and UDP-N-acetyl-alpha-D-glucosamine: step 6/6. In terms of biological role, transfers the gamma-phosphate of ATP to the 4'-position of a tetraacyldisaccharide 1-phosphate intermediate (termed DS-1-P) to form tetraacyldisaccharide 1,4'-bis-phosphate (lipid IVA). The polypeptide is Tetraacyldisaccharide 4'-kinase (Caulobacter vibrioides (strain ATCC 19089 / CIP 103742 / CB 15) (Caulobacter crescentus)).